Here is a 400-residue protein sequence, read N- to C-terminus: Phosphoglycerate kinase (400 aa).

Substrate-binding positions include 21-23 (DLN), Arg-36, 59-62 (HLGR), Arg-114, and Arg-147. ATP contacts are provided by residues Lys-202, Glu-329, and 355–358 (GGDT).

Belongs to the phosphoglycerate kinase family. As to quaternary structure, monomer.

The protein localises to the cytoplasm. It catalyses the reaction (2R)-3-phosphoglycerate + ATP = (2R)-3-phospho-glyceroyl phosphate + ADP. The protein operates within carbohydrate degradation; glycolysis; pyruvate from D-glyceraldehyde 3-phosphate: step 2/5. The chain is Phosphoglycerate kinase from Psychrobacter cryohalolentis (strain ATCC BAA-1226 / DSM 17306 / VKM B-2378 / K5).